A 471-amino-acid polypeptide reads, in one-letter code: Serine hydroxymethyltransferase 4 (471 aa).

Residue Met-1 is modified to N-acetylmethionine. Ser-39 lines the L-serine pocket. Pemetrexed contacts are provided by Ser-39, Tyr-59, and Glu-61. Glu-61 and Tyr-69 together coordinate L-serine. Residues 105-107 (SGS), His-134, Ser-190, and His-218 contribute to the pemetrexed site. 2 residues coordinate L-serine: His-218 and Lys-244. Lys-244 carries the N6-(pyridoxal phosphate)lysine modification. Gly-290 lines the pemetrexed pocket. Lys-373 provides a ligand contact to methotrexate. Residue Arg-389 coordinates L-serine. Arg-389 contacts pemetrexed.

This sequence belongs to the SHMT family. As to quaternary structure, homotetramer. Interacts with UBP16. Pyridoxal 5'-phosphate is required as a cofactor. Mostly expressed in flowers, less abundant in roots, inflorescence stems, and siliques, and barely detectable in leaves.

Its subcellular location is the cytoplasm. It carries out the reaction (6R)-5,10-methylene-5,6,7,8-tetrahydrofolate + glycine + H2O = (6S)-5,6,7,8-tetrahydrofolate + L-serine. Its pathway is one-carbon metabolism; tetrahydrofolate interconversion. Inhibited by the antifolate drugs methotrexate and pemetrexed. Functionally, catalyzes the interconversion of serine and glycine with the conversion of tetrahydrofolate (THF) into 5,10-methylene-THF. The protein is Serine hydroxymethyltransferase 4 of Arabidopsis thaliana (Mouse-ear cress).